The following is a 232-amino-acid chain: MEKSRIIIALDYPNEEQALSLVRQLDPAQCRLKVGKELFTRAGPSLVKRLAAQGFPIFLDLKFHDIPHTVARACLAAADLGVWMLNIHALGGLSMMKAAQEALANHPSHPQLIAVTVLTSMDQAALSQIGLAGTPEDNVLQLALLTQEAGLDGIVCSGQEAPALRQTLGKEFLLVTPGIRPAGAAPKDQQRVLTPREALAKGANYLVIGRPITAAPDPMMALRAIEAEISNV.

Substrate contacts are provided by residues aspartate 11, lysine 33, 60–69 (DLKFHDIPHT), threonine 119, arginine 180, glutamine 189, glycine 209, and arginine 210. Residue lysine 62 is the Proton donor of the active site.

It belongs to the OMP decarboxylase family. Type 1 subfamily. In terms of assembly, homodimer.

It carries out the reaction orotidine 5'-phosphate + H(+) = UMP + CO2. It functions in the pathway pyrimidine metabolism; UMP biosynthesis via de novo pathway; UMP from orotate: step 2/2. In terms of biological role, catalyzes the decarboxylation of orotidine 5'-monophosphate (OMP) to uridine 5'-monophosphate (UMP). This Nitrosococcus oceani (strain ATCC 19707 / BCRC 17464 / JCM 30415 / NCIMB 11848 / C-107) protein is Orotidine 5'-phosphate decarboxylase.